Reading from the N-terminus, the 101-residue chain is Urease subunit beta (101 aa).

Belongs to the urease beta subunit family. As to quaternary structure, heterotrimer of UreA (gamma), UreB (beta) and UreC (alpha) subunits. Three heterotrimers associate to form the active enzyme.

The protein resides in the cytoplasm. It catalyses the reaction urea + 2 H2O + H(+) = hydrogencarbonate + 2 NH4(+). Its pathway is nitrogen metabolism; urea degradation; CO(2) and NH(3) from urea (urease route): step 1/1. This is Urease subunit beta from Rhizobium leguminosarum bv. trifolii (strain WSM2304).